A 267-amino-acid chain; its full sequence is Cell division protein FtsQ (267 aa).

The Cytoplasmic portion of the chain corresponds to 1–32; sequence MRKKTSSNKKKQTKKTNNISLRRKLRLIYKKA. The helical transmembrane segment at 33–53 threads the bilayer; it reads ILGLKIALIIFVCLFVFTKYF. Residues 54 to 267 lie on the Periplasmic side of the membrane; the sequence is AGIKTYLTTN…DKNKYYIEKY (214 aa). The POTRA domain occupies 73-141; it reads FKLENVIIEG…NTVYIKLFER (69 aa).

This sequence belongs to the FtsQ/DivIB family. FtsQ subfamily.

The protein localises to the cell inner membrane. In terms of biological role, essential cell division protein. This Rickettsia felis (strain ATCC VR-1525 / URRWXCal2) (Rickettsia azadi) protein is Cell division protein FtsQ.